Reading from the N-terminus, the 148-residue chain is Large ribosomal subunit protein bL28c (148 aa).

The N-terminal 71 residues, 1–71, are a transit peptide targeting the chloroplast; it reads MAASGMLISN…PLKPSLQPVA (71 aa).

Component of the chloroplast large ribosomal subunit (LSU). Mature 70S chloroplast ribosomes of higher plants consist of a small (30S) and a large (50S) subunit. The 30S small subunit contains 1 molecule of ribosomal RNA (16S rRNA) and 24 different proteins. The 50S large subunit contains 3 rRNA molecules (23S, 5S and 4.5S rRNA) and 33 different proteins.

The protein resides in the plastid. It is found in the chloroplast. Its function is as follows. Component of the chloroplast ribosome (chloro-ribosome), a dedicated translation machinery responsible for the synthesis of chloroplast genome-encoded proteins, including proteins of the transcription and translation machinery and components of the photosynthetic apparatus. The chain is Large ribosomal subunit protein bL28c (RPL28) from Spinacia oleracea (Spinach).